We begin with the raw amino-acid sequence, 151 residues long: MKAVIQRVSEARVVVDGEVVGAIERGILVLLGVEKGDAERDAAWLAEKVAGLRIFEDEAGKMNLSVREVTGGILAVSQFTLAGNCAKGRRPSFDTAAPPDEGKRLYGRFVDFMRETGIPTATGIFQADMKVHLVNDGPVTFILESPKATGG.

The short motif at glycine 137–proline 138 is the Gly-cisPro motif, important for rejection of L-amino acids element.

The protein belongs to the DTD family. As to quaternary structure, homodimer.

It localises to the cytoplasm. The enzyme catalyses glycyl-tRNA(Ala) + H2O = tRNA(Ala) + glycine + H(+). It carries out the reaction a D-aminoacyl-tRNA + H2O = a tRNA + a D-alpha-amino acid + H(+). In terms of biological role, an aminoacyl-tRNA editing enzyme that deacylates mischarged D-aminoacyl-tRNAs. Also deacylates mischarged glycyl-tRNA(Ala), protecting cells against glycine mischarging by AlaRS. Acts via tRNA-based rather than protein-based catalysis; rejects L-amino acids rather than detecting D-amino acids in the active site. By recycling D-aminoacyl-tRNA to D-amino acids and free tRNA molecules, this enzyme counteracts the toxicity associated with the formation of D-aminoacyl-tRNA entities in vivo and helps enforce protein L-homochirality. The polypeptide is D-aminoacyl-tRNA deacylase (Geobacter metallireducens (strain ATCC 53774 / DSM 7210 / GS-15)).